Reading from the N-terminus, the 306-residue chain is Stimulator of interferon genes protein 5 (306 aa).

The interval 1 to 50 is disordered; sequence MMSNDSQSEKRTAKWTGSGTPIAEGEESSSPSAHQTRQKATAADDDDDQQ. The 2',3'-cGAMP site is built by tyrosine 119, arginine 180, and arginine 186.

It belongs to the STING family.

Its function is as follows. Facilitator of innate immune signaling that acts as a sensor of second messenger signals produced by cyclic GMP-AMP synthase-like receptors (cGLRs) and promotes the production of type I interferon. Innate immune response is triggered in response to nucleotides from viruses and bacteria delivered to the cytoplasm. Acts by binding cyclic dinucleotides: recognizes and binds 2'-3' linked cGAMP (2'-3'-cGAMP), a second messengers produced by cGLRs in response to nucleotides in the cytosol, such as double-stranded RNA (dsRNA). Upon binding to 2'-3'-cGAMP, oligomerizes and promotes the recruitment and subsequent activation of the transcription factor IRF3 to induce expression of type I interferon. This Stylophora pistillata (Smooth cauliflower coral) protein is Stimulator of interferon genes protein 5.